The sequence spans 619 residues: Kininogen-2 (619 aa).

The first 18 residues, 1–18 (MKLITILFLCSRLLPSLT), serve as a signal peptide directing secretion. Q19 bears the Pyrrolidone carboxylic acid mark. In terms of domain architecture, Cystatin kininogen-type 1 spans 27-131 (CNDQDVFKAV…IQTCLITPAE (105 aa)). Cystine bridges form between C27/C589, C82/C93, C106/C125, C141/C144, C205/C217, C228/C247, C261/C264, C325/C337, and C348/C367. N87 carries an N-linked (GlcNAc...) asparagine glycan. T136 carries O-linked (GalNAc...) threonine; partial glycosylation. A Cystatin kininogen-type 2 domain is found at 150–253 (TKSPDLEPVL…SQKCDLYPGE (104 aa)). N-linked (GlcNAc...) asparagine glycans are attached at residues N168 and N169. An N-linked (GlcNAc...) asparagine; partial glycan is attached at N197. N204 carries N-linked (GlcNAc...) asparagine glycosylation. One can recognise a Cystatin kininogen-type 3 domain in the interval 270–373 (VDSPDLEEAL…TVNCQPLGQT (104 aa)). Residue N280 is glycosylated (N-linked (GlcNAc...) asparagine). P380 is subject to 4-hydroxyproline. The segment at 394 to 495 (EGSTTVSLPH…GKNNGKHYDW (102 aa)) is disordered. S396 is a glycosylation site (O-linked (GalNAc...) serine). O-linked (GalNAc...) threonine glycans are attached at residues T397 and T398. S400 and S404 each carry an O-linked (GalNAc...) serine glycan. The segment covering 442–490 (GHKHKHDQGHGHHRSHGLGHGHQKQHGLGHGHKHGHGHGKHKNKGKNNG) has biased composition (basic residues). The O-linked (GalNAc...) serine glycan is linked to S510. O-linked (GalNAc...) threonine glycans are attached at residues T518, T522, T534, T546, T551, and T568.

Post-translationally, bradykinin is released from kininogen by plasma kallikrein. As to expression, plasma.

It localises to the secreted. The protein resides in the extracellular space. Its function is as follows. (1) Kininogens are inhibitors of thiol proteases; (2) HMW-kininogen plays an important role in blood coagulation by helping to position optimally prekallikrein and factor XI next to factor XII; (3) HMW-kininogen inhibits the thrombin- and plasmin-induced aggregation of thrombocytes; (4) the active peptide bradykinin that is released from HMW-kininogen shows a variety of physiological effects: (4A) influence in smooth muscle contraction, (4B) induction of hypotension, (4C) natriuresis and diuresis, (4D) decrease in blood glucose level, (4E) it is a mediator of inflammation and causes (4E1) increase in vascular permeability, (4E2) stimulation of nociceptors (4E3) release of other mediators of inflammation (e.g. prostaglandins), (4F) it has a cardioprotective effect (directly via bradykinin action, indirectly via endothelium-derived relaxing factor action); (5) LMW-kininogen inhibits the aggregation of thrombocytes; (6) LMW-kininogen is in contrast to HMW-kininogen not involved in blood clotting. The protein is Kininogen-2 (KNG2) of Bos taurus (Bovine).